Reading from the N-terminus, the 130-residue chain is Small ribosomal subunit protein uS9 (130 aa).

Belongs to the universal ribosomal protein uS9 family.

The protein is Small ribosomal subunit protein uS9 of Aeromonas hydrophila subsp. hydrophila (strain ATCC 7966 / DSM 30187 / BCRC 13018 / CCUG 14551 / JCM 1027 / KCTC 2358 / NCIMB 9240 / NCTC 8049).